A 786-amino-acid chain; its full sequence is Endonuclease MutS2 (786 aa).

332 to 339 (GPNTGGKT) is an ATP binding site. In terms of domain architecture, Smr spans 711 to 786 (IDLRGMDSME…GTGVTVVELK (76 aa)).

It belongs to the DNA mismatch repair MutS family. MutS2 subfamily. Homodimer. Binds to stalled ribosomes, contacting rRNA.

Endonuclease that is involved in the suppression of homologous recombination and thus may have a key role in the control of bacterial genetic diversity. Functionally, acts as a ribosome collision sensor, splitting the ribosome into its 2 subunits. Detects stalled/collided 70S ribosomes which it binds and splits by an ATP-hydrolysis driven conformational change. Acts upstream of the ribosome quality control system (RQC), a ribosome-associated complex that mediates the extraction of incompletely synthesized nascent chains from stalled ribosomes and their subsequent degradation. Probably generates substrates for RQC. The chain is Endonuclease MutS2 from Clostridium tetani (strain Massachusetts / E88).